Consider the following 32-residue polypeptide: Islet amyloid polypeptide (32 aa).

This sequence belongs to the calcitonin family. In terms of assembly, can form homodimers. Interacts with IDE and INS. Interaction with INS inhibits homodimerization and fibril formation.

It localises to the secreted. Amylin/IAPP is a glucoregulatory peptide hormone that plays an important role in the regulation of energy homeostasis. Selectively inhibits insulin-stimulated glucose utilization and glycogen deposition in muscle, while not affecting adipocyte glucose metabolism. IAPP function is mediated by the CALCR-RAMPs (AMYRs) receptor complexes. Amylin can also bind CALCR receptor in the absence of RAMPs, although it is more selective for AMYRs. This Ovis aries (Sheep) protein is Islet amyloid polypeptide (IAPP).